The sequence spans 1073 residues: Carbamoyl phosphate synthase large chain (1073 aa).

The segment at 1–402 (MPRRIDVRKV…ALQKAIRMLD (402 aa)) is carboxyphosphate synthetic domain. Residues Arg129, Arg169, Gly175, Gly176, Lys208, Leu210, Glu215, Gly241, Val242, His243, Gln284, and Glu299 each coordinate ATP. An ATP-grasp 1 domain is found at 133–328 (RETMMKAGLP…LAYIAAKLAL (196 aa)). Positions 284, 299, and 301 each coordinate Mg(2+). Positions 284, 299, and 301 each coordinate Mn(2+). The segment at 403–555 (IGEPGVVAGP…MSYNAYEDDE (153 aa)) is oligomerization domain. Residues 556 to 944 (PITTGRPRLI…LKSWLSVQGN (389 aa)) are carbamoyl phosphate synthetic domain. Residues 681-871 (SQLLEELGIK…LMRAAAEAAL (191 aa)) enclose the ATP-grasp 2 domain. The ATP site is built by Arg717, Lys756, Leu758, Glu763, Gly787, Val788, His789, Ser790, Gln830, and Glu842. Residues Gln830, Glu842, and Asn844 each coordinate Mg(2+). Mn(2+)-binding residues include Gln830, Glu842, and Asn844. In terms of domain architecture, MGS-like spans 944 to 1073 (NRIPPAGSIV…EYWGPNVEPF (130 aa)). Positions 945–1073 (RIPPAGSIVL…EYWGPNVEPF (129 aa)) are allosteric domain.

Belongs to the CarB family. As to quaternary structure, composed of two chains; the small (or glutamine) chain promotes the hydrolysis of glutamine to ammonia, which is used by the large (or ammonia) chain to synthesize carbamoyl phosphate. Tetramer of heterodimers (alpha,beta)4. Mg(2+) is required as a cofactor. Mn(2+) serves as cofactor.

The catalysed reaction is hydrogencarbonate + L-glutamine + 2 ATP + H2O = carbamoyl phosphate + L-glutamate + 2 ADP + phosphate + 2 H(+). It catalyses the reaction hydrogencarbonate + NH4(+) + 2 ATP = carbamoyl phosphate + 2 ADP + phosphate + 2 H(+). It participates in amino-acid biosynthesis; L-arginine biosynthesis; carbamoyl phosphate from bicarbonate: step 1/1. Its pathway is pyrimidine metabolism; UMP biosynthesis via de novo pathway; (S)-dihydroorotate from bicarbonate: step 1/3. In terms of biological role, large subunit of the glutamine-dependent carbamoyl phosphate synthetase (CPSase). CPSase catalyzes the formation of carbamoyl phosphate from the ammonia moiety of glutamine, carbonate, and phosphate donated by ATP, constituting the first step of 2 biosynthetic pathways, one leading to arginine and/or urea and the other to pyrimidine nucleotides. The large subunit (synthetase) binds the substrates ammonia (free or transferred from glutamine from the small subunit), hydrogencarbonate and ATP and carries out an ATP-coupled ligase reaction, activating hydrogencarbonate by forming carboxy phosphate which reacts with ammonia to form carbamoyl phosphate. The protein is Carbamoyl phosphate synthase large chain of Hyperthermus butylicus (strain DSM 5456 / JCM 9403 / PLM1-5).